A 510-amino-acid polypeptide reads, in one-letter code: Histidine ammonia-lyase (510 aa).

A cross-link (5-imidazolinone (Ala-Gly)) is located at residues 144 to 146; it reads ASG. Position 145 is a 2,3-didehydroalanine (Ser) (Ser-145).

It belongs to the PAL/histidase family. In terms of processing, contains an active site 4-methylidene-imidazol-5-one (MIO), which is formed autocatalytically by cyclization and dehydration of residues Ala-Ser-Gly.

The protein resides in the cytoplasm. The catalysed reaction is L-histidine = trans-urocanate + NH4(+). It participates in amino-acid degradation; L-histidine degradation into L-glutamate; N-formimidoyl-L-glutamate from L-histidine: step 1/3. This chain is Histidine ammonia-lyase, found in Chromobacterium violaceum (strain ATCC 12472 / DSM 30191 / JCM 1249 / CCUG 213 / NBRC 12614 / NCIMB 9131 / NCTC 9757 / MK).